A 304-amino-acid polypeptide reads, in one-letter code: Putative dihydroorotate dehydrogenase A (fumarate) (304 aa).

FMN-binding positions include Ser21 and 45-46; that span reads KS. Residues Lys45, 69 to 73, and Asn129 each bind substrate; that span reads NAVGL. Asn129 lines the FMN pocket. The active-site Nucleophile is the Cys132. 2 residues coordinate FMN: Lys168 and Ile194. 195-196 provides a ligand contact to substrate; sequence NT. Residues Gly220, 246 to 247, and 268 to 269 contribute to the FMN site; these read GG and GS.

Belongs to the dihydroorotate dehydrogenase family. Type 1 subfamily. As to quaternary structure, homodimer. FMN serves as cofactor.

Its subcellular location is the cytoplasm. It catalyses the reaction (S)-dihydroorotate + fumarate = orotate + succinate. It functions in the pathway pyrimidine metabolism; UMP biosynthesis via de novo pathway. In terms of biological role, catalyzes the conversion of dihydroorotate to orotate with fumarate as the electron acceptor. This is Putative dihydroorotate dehydrogenase A (fumarate) (pyrD) from Pediococcus pentosaceus (strain ATCC 25745 / CCUG 21536 / LMG 10740 / 183-1w).